The following is a 230-amino-acid chain: tRNA (guanine-N(7)-)-methyltransferase (230 aa).

Residues E61, E86, N113, and D136 each contribute to the S-adenosyl-L-methionine site. The active site involves D136. Substrate is bound by residues K140, D172, and 208–211 (TKYE).

The protein belongs to the class I-like SAM-binding methyltransferase superfamily. TrmB family.

The catalysed reaction is guanosine(46) in tRNA + S-adenosyl-L-methionine = N(7)-methylguanosine(46) in tRNA + S-adenosyl-L-homocysteine. Its pathway is tRNA modification; N(7)-methylguanine-tRNA biosynthesis. Its function is as follows. Catalyzes the formation of N(7)-methylguanine at position 46 (m7G46) in tRNA. The chain is tRNA (guanine-N(7)-)-methyltransferase from Mycobacterium leprae (strain Br4923).